The chain runs to 192 residues: Phosphoheptose isomerase (192 aa).

The 158-residue stretch at 35-192 (LIETLENQGK…CIERHFAHKN (158 aa)) folds into the SIS domain. Substrate is bound at residue 50–52 (NGG). Zn(2+) is bound by residues H59 and E63. Substrate is bound by residues E63, 92 to 93 (ND), 118 to 120 (STS), S123, and Q170. Residues Q170 and H178 each contribute to the Zn(2+) site.

This sequence belongs to the SIS family. GmhA subfamily. As to quaternary structure, homotetramer. It depends on Zn(2+) as a cofactor.

It is found in the cytoplasm. The catalysed reaction is 2 D-sedoheptulose 7-phosphate = D-glycero-alpha-D-manno-heptose 7-phosphate + D-glycero-beta-D-manno-heptose 7-phosphate. It participates in carbohydrate biosynthesis; D-glycero-D-manno-heptose 7-phosphate biosynthesis; D-glycero-alpha-D-manno-heptose 7-phosphate and D-glycero-beta-D-manno-heptose 7-phosphate from sedoheptulose 7-phosphate: step 1/1. In terms of biological role, catalyzes the isomerization of sedoheptulose 7-phosphate in D-glycero-D-manno-heptose 7-phosphate. The polypeptide is Phosphoheptose isomerase (Helicobacter pylori (strain HPAG1)).